Consider the following 163-residue polypeptide: Phosphopantetheine adenylyltransferase (163 aa).

Serine 9 serves as a coordination point for substrate. ATP contacts are provided by residues 9–10 (SF) and histidine 17. The substrate site is built by lysine 41, isoleucine 75, and arginine 89. ATP is bound by residues 90–92 (GIR), glutamate 100, and 125–131 (HLYVRSD).

The protein belongs to the bacterial CoaD family. Homohexamer. Requires Mg(2+) as cofactor.

Its subcellular location is the cytoplasm. It catalyses the reaction (R)-4'-phosphopantetheine + ATP + H(+) = 3'-dephospho-CoA + diphosphate. The protein operates within cofactor biosynthesis; coenzyme A biosynthesis; CoA from (R)-pantothenate: step 4/5. Reversibly transfers an adenylyl group from ATP to 4'-phosphopantetheine, yielding dephospho-CoA (dPCoA) and pyrophosphate. The protein is Phosphopantetheine adenylyltransferase of Borreliella burgdorferi (strain ZS7) (Borrelia burgdorferi).